A 355-amino-acid polypeptide reads, in one-letter code: Holliday junction branch migration complex subunit RuvB (355 aa).

Positions 4-190 (TDKLAAERII…FGIVARLEFY (187 aa)) are large ATPase domain (RuvB-L). ATP contacts are provided by residues L29, R30, G71, K74, T75, T76, 137–139 (EDY), R180, Y190, and R227. T75 is a binding site for Mg(2+). The interval 191-261 (DAEQLSRIVR…VADAALAMLD (71 aa)) is small ATPAse domain (RuvB-S). Residues 264-355 (PVGFDLMDRK…GSMWNTPDGA (92 aa)) form a head domain (RuvB-H) region. 3 residues coordinate DNA: R300, R319, and R324.

Belongs to the RuvB family. As to quaternary structure, homohexamer. Forms an RuvA(8)-RuvB(12)-Holliday junction (HJ) complex. HJ DNA is sandwiched between 2 RuvA tetramers; dsDNA enters through RuvA and exits via RuvB. An RuvB hexamer assembles on each DNA strand where it exits the tetramer. Each RuvB hexamer is contacted by two RuvA subunits (via domain III) on 2 adjacent RuvB subunits; this complex drives branch migration. In the full resolvosome a probable DNA-RuvA(4)-RuvB(12)-RuvC(2) complex forms which resolves the HJ.

Its subcellular location is the cytoplasm. It carries out the reaction ATP + H2O = ADP + phosphate + H(+). The RuvA-RuvB-RuvC complex processes Holliday junction (HJ) DNA during genetic recombination and DNA repair, while the RuvA-RuvB complex plays an important role in the rescue of blocked DNA replication forks via replication fork reversal (RFR). RuvA specifically binds to HJ cruciform DNA, conferring on it an open structure. The RuvB hexamer acts as an ATP-dependent pump, pulling dsDNA into and through the RuvAB complex. RuvB forms 2 homohexamers on either side of HJ DNA bound by 1 or 2 RuvA tetramers; 4 subunits per hexamer contact DNA at a time. Coordinated motions by a converter formed by DNA-disengaged RuvB subunits stimulates ATP hydrolysis and nucleotide exchange. Immobilization of the converter enables RuvB to convert the ATP-contained energy into a lever motion, pulling 2 nucleotides of DNA out of the RuvA tetramer per ATP hydrolyzed, thus driving DNA branch migration. The RuvB motors rotate together with the DNA substrate, which together with the progressing nucleotide cycle form the mechanistic basis for DNA recombination by continuous HJ branch migration. Branch migration allows RuvC to scan DNA until it finds its consensus sequence, where it cleaves and resolves cruciform DNA. The protein is Holliday junction branch migration complex subunit RuvB of Burkholderia vietnamiensis (strain G4 / LMG 22486) (Burkholderia cepacia (strain R1808)).